Consider the following 185-residue polypeptide: Elongation factor P (185 aa).

Belongs to the elongation factor P family.

The protein localises to the cytoplasm. It participates in protein biosynthesis; polypeptide chain elongation. In terms of biological role, involved in peptide bond synthesis. Stimulates efficient translation and peptide-bond synthesis on native or reconstituted 70S ribosomes in vitro. Probably functions indirectly by altering the affinity of the ribosome for aminoacyl-tRNA, thus increasing their reactivity as acceptors for peptidyl transferase. The sequence is that of Elongation factor P from Bacillus anthracis (strain CDC 684 / NRRL 3495).